We begin with the raw amino-acid sequence, 670 residues long: DNA ligase (670 aa).

NAD(+) is bound by residues 32–36 (DAEYD), 81–82 (SL), and glutamate 113. Residue lysine 115 is the N6-AMP-lysine intermediate of the active site. Arginine 136, glutamate 173, lysine 290, and lysine 314 together coordinate NAD(+). Residues cysteine 406, cysteine 409, cysteine 424, and cysteine 430 each coordinate Zn(2+). Residues 592 to 670 (EIDSPFAGKT…EQEMMRLLGE (79 aa)) enclose the BRCT domain.

It belongs to the NAD-dependent DNA ligase family. LigA subfamily. Requires Mg(2+) as cofactor. The cofactor is Mn(2+).

It catalyses the reaction NAD(+) + (deoxyribonucleotide)n-3'-hydroxyl + 5'-phospho-(deoxyribonucleotide)m = (deoxyribonucleotide)n+m + AMP + beta-nicotinamide D-nucleotide.. DNA ligase that catalyzes the formation of phosphodiester linkages between 5'-phosphoryl and 3'-hydroxyl groups in double-stranded DNA using NAD as a coenzyme and as the energy source for the reaction. It is essential for DNA replication and repair of damaged DNA. The protein is DNA ligase of Erwinia tasmaniensis (strain DSM 17950 / CFBP 7177 / CIP 109463 / NCPPB 4357 / Et1/99).